The chain runs to 327 residues: 2-oxoisovalerate dehydrogenase subunit beta (327 aa).

Thiamine diphosphate-binding positions include E29, 58–60, Q82, and 86–89; these read LAE and FIMP. Substrate contacts are provided by residues 83–86 and H129; that span reads FADF. H129 serves as the catalytic Proton acceptor.

As to quaternary structure, heterotetramer of two alpha and two beta chains. Directly associated with ODBA in the E1 complex. It depends on thiamine diphosphate as a cofactor.

It carries out the reaction N(6)-[(R)-lipoyl]-L-lysyl-[protein] + 3-methyl-2-oxobutanoate + H(+) = N(6)-[(R)-S(8)-2-methylpropanoyldihydrolipoyl]-L-lysyl-[protein] + CO2. Functionally, the branched-chain alpha-keto dehydrogenase complex catalyzes the overall conversion of alpha-keto acids to acyl-CoA and CO(2). It contains multiple copies of three enzymatic components: branched-chain alpha-keto acid decarboxylase (E1), lipoamide acyltransferase (E2) and lipoamide dehydrogenase (E3). The chain is 2-oxoisovalerate dehydrogenase subunit beta (bfmBAB) from Bacillus subtilis (strain 168).